The chain runs to 326 residues: MKNDNKANDIIIDSVKVPDSYKPPKNPIVFCHGLSGFDKLILIPSVFHLTNLISNSIVHNMAENFMQDDEDKSDNKYTNLLEIEYWIGVKKFLQSKGCTVITTKVPGFGSIEERAMALDAQLQKEVKKIESKDKRHSLNLIAHSMGGLDCRYLICNIKNRNYDILSLTTISTPHRGSEMADYVVDLFENLNALRVSQKILPICFYQLTTAYMKYFNLVTPNSPKVSYFSYGCSFVPKWYNVFCTPWKIVYERSKGCPNDGLVTINSSKWGEYRGTLKDMDHLDVINWKNKLQDDWSKFFRTTTVGEKVDILNFYLKITDDLARKGF.

The short motif at 142 to 146 (AHSMG) is the (A/G)XSXG lipase motif element.

As to quaternary structure, interacts with MIA40; forms mixed disulfide intermediates with MIA40.

It is found in the mitochondrion. The protein resides in the mitochondrion intermembrane space. The enzyme catalyses a triacylglycerol + H2O = a diacylglycerol + a fatty acid + H(+). It carries out the reaction 1,2,3-tri-(9Z-octadecenoyl)-glycerol + H2O = di-(9Z)-octadecenoylglycerol + (9Z)-octadecenoate + H(+). The catalysed reaction is 1,2,3-tributanoylglycerol + H2O = dibutanoylglycerol + butanoate + H(+). It catalyses the reaction 1,2,3-trioctanoylglycerol + H2O = dioctanoylglycerol + octanoate + H(+). The enzyme catalyses di-(9Z)-octadecenoylglycerol + H2O = (9Z-octadecenoyl)-glycerol + (9Z)-octadecenoate + H(+). It carries out the reaction dioctanoylglycerol + H2O = octanoylglycerol + octanoate + H(+). In terms of biological role, mitochondrial triacylglycerol (TAG) lipase with activity toward long-chain diacylglycerols (DAGs) and triacylglycerols (TAGs). Involved in mitochondrial lipid metabolism. The chain is Triacylglycerol lipase 2 (TGL2) from Saccharomyces cerevisiae (strain ATCC 204508 / S288c) (Baker's yeast).